The chain runs to 34 residues: AXSGKLQWIGASESGAEFGQGNLPGVVGTDYTFP.

The enzyme catalyses Endohydrolysis of (1-&gt;4)-beta-D-glucosidic linkages in cellulose, lichenin and cereal beta-D-glucans.. This chain is Endoglucanase 1, found in Sclerotinia sclerotiorum (White mold).